A 113-amino-acid polypeptide reads, in one-letter code: MNTVRVTFLLVFVLAVSLGRADKDENRMEMQEKTEQGKSYLDFAENLLLQKLEELEAKLLEEDSEESRNSRQKRCIGEGVPCDENDPRCCSGLVCLKPTLHGIWYKSYYCYKK.

The N-terminal stretch at 1 to 21 (MNTVRVTFLLVFVLAVSLGRA) is a signal peptide. Residues 22–74 (DKDENRMEMQEKTEQGKSYLDFAENLLLQKLEELEAKLLEEDSEESRNSRQKR) constitute a propeptide that is removed on maturation. Cystine bridges form between C75/C90, C82/C95, and C89/C110.

The protein belongs to the neurotoxin 14 (magi-1) family. 01 (HNTX-16) subfamily. Expressed by the venom gland.

It localises to the secreted. Its function is as follows. Probable ion channel inhibitor. In Cyriopagopus hainanus (Chinese bird spider), this protein is U11-theraphotoxin-Hhn1a.